A 736-amino-acid chain; its full sequence is Elongation factor 2 (736 aa).

Positions 18 to 234 (TRVRNIGIIA…VIDAYTASDK (217 aa)) constitute a tr-type G domain. GTP-binding positions include 27-34 (AHVDHGKT), 93-97 (DTPGH), and 147-150 (NKVD). A Diphthamide modification is found at histidine 603.

This sequence belongs to the TRAFAC class translation factor GTPase superfamily. Classic translation factor GTPase family. EF-G/EF-2 subfamily.

Its subcellular location is the cytoplasm. In terms of biological role, catalyzes the GTP-dependent ribosomal translocation step during translation elongation. During this step, the ribosome changes from the pre-translocational (PRE) to the post-translocational (POST) state as the newly formed A-site-bound peptidyl-tRNA and P-site-bound deacylated tRNA move to the P and E sites, respectively. Catalyzes the coordinated movement of the two tRNA molecules, the mRNA and conformational changes in the ribosome. The sequence is that of Elongation factor 2 (fusA) from Saccharolobus solfataricus (strain ATCC 35092 / DSM 1617 / JCM 11322 / P2) (Sulfolobus solfataricus).